The primary structure comprises 908 residues: Translation initiation factor IF-2 (908 aa).

2 disordered regions span residues 52–229 (QSHG…AEEA) and 241–316 (AGQY…SAQH). Positions 65-84 (KSKTTSTARVTGSSGKSKSV) are enriched in polar residues. Composition is skewed to basic and acidic residues over residues 94–108 (FEKP…ELAA), 120–138 (AAKD…EERQ), 176–185 (IEVKPKEQPK), 193–229 (PKVE…AEEA), 270–280 (SFEKERREIKR), and 294–303 (KNQDEREIKN). Residues 409-578 (TRPPVVTIMG…SLQAELMELE (170 aa)) form the tr-type G domain. Positions 418-425 (GHVDHGKT) are G1. 418 to 425 (GHVDHGKT) provides a ligand contact to GTP. The segment at 443–447 (GITQH) is G2. The tract at residues 464–467 (DTPG) is G3. GTP-binding positions include 464 to 468 (DTPGH) and 518 to 521 (NKMD). The tract at residues 518–521 (NKMD) is G4. Residues 554–556 (SAK) are G5.

It belongs to the TRAFAC class translation factor GTPase superfamily. Classic translation factor GTPase family. IF-2 subfamily.

Its subcellular location is the cytoplasm. In terms of biological role, one of the essential components for the initiation of protein synthesis. Protects formylmethionyl-tRNA from spontaneous hydrolysis and promotes its binding to the 30S ribosomal subunits. Also involved in the hydrolysis of GTP during the formation of the 70S ribosomal complex. This chain is Translation initiation factor IF-2, found in Psychrobacter arcticus (strain DSM 17307 / VKM B-2377 / 273-4).